A 489-amino-acid polypeptide reads, in one-letter code: Aklavinone 12-hydroxylase DnrF (489 aa).

FAD-binding positions include 17-18 (LG), glutamate 37, glutamine 121, and leucine 145. Tyrosine 224 serves as the catalytic Proton acceptor. Residue aspartate 308 coordinates FAD. Glycine 317 lines the aklavinone pocket. The interval 402-428 (VAAEDDDPEPTEDPRRPSGRPGFRAPH) is disordered.

This sequence belongs to the PheA/TfdB FAD monooxygenase family. As to quaternary structure, monomer. Requires FAD as cofactor.

It carries out the reaction aklavinone + NADPH + O2 + H(+) = epsilon-rhodomycinone + NADP(+) + H2O. It functions in the pathway antibiotic biosynthesis; daunorubicin biosynthesis. Its pathway is antibiotic biosynthesis; carminomycin biosynthesis. It participates in antibiotic biosynthesis; rhodomycin biosynthesis. The protein operates within antibiotic biosynthesis; doxorubicin biosynthesis. In terms of biological role, involved in the biosynthesis of the anthracyclines carminomycin, rhodomycin, daunorubicin (daunomycin) and doxorubicin (adriamycin) which are aromatic polyketide antibiotics that exhibit high cytotoxicity and are widely applied in the chemotherapy of a variety of cancers. Catalyzes the incorporation of a hydroxyl group at position C-11 of aklavinone, resulting in epsilon-rhodomycinone. This chain is Aklavinone 12-hydroxylase DnrF (dnrF), found in Streptomyces peucetius subsp. caesius.